The following is a 221-amino-acid chain: Octanoyltransferase (221 aa).

The 179-residue stretch at 40–218 folds into the BPL/LPL catalytic domain; that stretch reads PNLEDVLILL…AFAEVFGLEL (179 aa). Residues 82–89, 149–151, and 162–164 each bind substrate; these read RGGEVTYH, AIG, and GFA. The active-site Acyl-thioester intermediate is C180.

This sequence belongs to the LipB family.

The protein resides in the cytoplasm. The catalysed reaction is octanoyl-[ACP] + L-lysyl-[protein] = N(6)-octanoyl-L-lysyl-[protein] + holo-[ACP] + H(+). It functions in the pathway protein modification; protein lipoylation via endogenous pathway; protein N(6)-(lipoyl)lysine from octanoyl-[acyl-carrier-protein]: step 1/2. Functionally, catalyzes the transfer of endogenously produced octanoic acid from octanoyl-acyl-carrier-protein onto the lipoyl domains of lipoate-dependent enzymes. Lipoyl-ACP can also act as a substrate although octanoyl-ACP is likely to be the physiological substrate. In Nostoc sp. (strain PCC 7120 / SAG 25.82 / UTEX 2576), this protein is Octanoyltransferase.